Reading from the N-terminus, the 330-residue chain is MTTATGTKPKKMEAFKMERGVKYRDAAKTSVIQVRNIDPDQELLPKPSWMKIKLPAASAKIDSIKHGMRRHGLHSVCEEASCPNLHECFNHGTATFMIMGAICTRRCPFCDVAHGKPLPLDLEEPRKVAETVQDMKLKYVVITSVDRDDLADRGAAHFAATVREIKALNPECKVEILVPDFRGRVEQAVEILKQNPPDVFNHNLENVPRLYREVRPGADYKWSLELLKIFKQEFPNIPTKSGLMVGLGETNEEILEVMQDLRDHGVTMLTIGQYLQPSRHHLKVERYVPPEEFDMFRSEAERMGFEHAACGPFVRSSYHADLQAKGELVK.

The [4Fe-4S] cluster site is built by Cys77, Cys82, Cys88, Cys103, Cys107, Cys110, and Ser317. Positions 89–306 (FNHGTATFMI…RSEAERMGFE (218 aa)) constitute a Radical SAM core domain.

Belongs to the radical SAM superfamily. Lipoyl synthase family. It depends on [4Fe-4S] cluster as a cofactor.

The protein localises to the cytoplasm. It carries out the reaction [[Fe-S] cluster scaffold protein carrying a second [4Fe-4S](2+) cluster] + N(6)-octanoyl-L-lysyl-[protein] + 2 oxidized [2Fe-2S]-[ferredoxin] + 2 S-adenosyl-L-methionine + 4 H(+) = [[Fe-S] cluster scaffold protein] + N(6)-[(R)-dihydrolipoyl]-L-lysyl-[protein] + 4 Fe(3+) + 2 hydrogen sulfide + 2 5'-deoxyadenosine + 2 L-methionine + 2 reduced [2Fe-2S]-[ferredoxin]. It functions in the pathway protein modification; protein lipoylation via endogenous pathway; protein N(6)-(lipoyl)lysine from octanoyl-[acyl-carrier-protein]: step 2/2. Functionally, catalyzes the radical-mediated insertion of two sulfur atoms into the C-6 and C-8 positions of the octanoyl moiety bound to the lipoyl domains of lipoate-dependent enzymes, thereby converting the octanoylated domains into lipoylated derivatives. This Actinobacillus pleuropneumoniae serotype 3 (strain JL03) protein is Lipoyl synthase.